Reading from the N-terminus, the 341-residue chain is Eukaryotic translation initiation factor 3 subunit I (341 aa).

5 WD repeats span residues 8 to 49 (GHER…GTYR), 50 to 91 (GHQG…KTWD), 135 to 184 (QSDE…LLYN), 189 to 228 (ELNQ…VLKS), and 286 to 325 (GHFG…YDFL).

Belongs to the eIF-3 subunit I family. In terms of assembly, component of the eukaryotic translation initiation factor 3 (eIF-3) complex.

Its subcellular location is the cytoplasm. Component of the eukaryotic translation initiation factor 3 (eIF-3) complex, which is involved in protein synthesis of a specialized repertoire of mRNAs and, together with other initiation factors, stimulates binding of mRNA and methionyl-tRNAi to the 40S ribosome. The eIF-3 complex specifically targets and initiates translation of a subset of mRNAs involved in cell proliferation. This is Eukaryotic translation initiation factor 3 subunit I from Chaetomium globosum (strain ATCC 6205 / CBS 148.51 / DSM 1962 / NBRC 6347 / NRRL 1970) (Soil fungus).